Consider the following 68-residue polypeptide: Large ribosomal subunit protein bL31 (68 aa).

The Zn(2+) site is built by C16, C18, C36, and C39.

Belongs to the bacterial ribosomal protein bL31 family. Type A subfamily. As to quaternary structure, part of the 50S ribosomal subunit. The cofactor is Zn(2+).

Its function is as follows. Binds the 23S rRNA. This chain is Large ribosomal subunit protein bL31, found in Dictyoglomus thermophilum (strain ATCC 35947 / DSM 3960 / H-6-12).